The primary structure comprises 197 residues: MKIKSSEFIISAVKREQYPDDNLPEIAFVGRSNVGKSSIINSLTNRRGLAKVSQTPGKTRLINFFLLNKDFYLVDLPGYGYAKVSKKEKASWGATIERYLLNRGPLKKVVLLVDCRHKPTADDVQMYEWIKHYGYEVVVIATKSDKISNNQIGKSEKLIKETLGLPKDHKLKFFSSLNKKGKDELVDYLFDDLVEEV.

Residues 22-195 (NLPEIAFVGR…VDYLFDDLVE (174 aa)) form the EngB-type G domain. Residues 30–37 (GRSNVGKS), 57–61 (GKTRL), 75–78 (DLPG), 142–145 (TKSD), and 174–176 (FSS) contribute to the GTP site. Residues Ser37 and Thr59 each coordinate Mg(2+).

It belongs to the TRAFAC class TrmE-Era-EngA-EngB-Septin-like GTPase superfamily. EngB GTPase family. Requires Mg(2+) as cofactor.

Functionally, necessary for normal cell division and for the maintenance of normal septation. The chain is Probable GTP-binding protein EngB from Clostridium perfringens (strain 13 / Type A).